We begin with the raw amino-acid sequence, 595 residues long: DNA primase (595 aa).

The CHC2-type zinc-finger motif lies at 38-62 (CPFHDEKTPSFIVYPTRGHYHCYGC). In terms of domain architecture, Toprim spans 251–331 (RRVILVEGQA…GITAIVCRLP (81 aa)). The Mg(2+) site is built by Glu-257, Asp-302, and Asp-304. Positions 430–441 (KGKKVSAKEPSS) are enriched in basic and acidic residues. Residues 430–451 (KGKKVSAKEPSSESKQTSTEGK) form a disordered region.

Belongs to the DnaG primase family. Monomer. Interacts with DnaB. The cofactor is Zn(2+). Mg(2+) is required as a cofactor.

It carries out the reaction ssDNA + n NTP = ssDNA/pppN(pN)n-1 hybrid + (n-1) diphosphate.. Its function is as follows. RNA polymerase that catalyzes the synthesis of short RNA molecules used as primers for DNA polymerase during DNA replication. The sequence is that of DNA primase from Chlamydia trachomatis serovar D (strain ATCC VR-885 / DSM 19411 / UW-3/Cx).